The primary structure comprises 121 residues: Large ribosomal subunit protein bL21 (121 aa).

It belongs to the bacterial ribosomal protein bL21 family. In terms of assembly, part of the 50S ribosomal subunit. Contacts protein L20.

Its function is as follows. This protein binds to 23S rRNA in the presence of protein L20. The chain is Large ribosomal subunit protein bL21 from Gloeobacter violaceus (strain ATCC 29082 / PCC 7421).